The chain runs to 331 residues: Rho GTPase-activating protein 5 (331 aa).

Residues 3–16 (IGGPTNIRHVAHVT) form the CRIB domain. Residues 48–225 (VSTESMQLSY…LLKSLTEKTV (178 aa)) enclose the Rho-GAP domain. The segment covering 227-251 (EREASSSVVDRRCSKEAEDGEKEKD) has biased composition (basic and acidic residues). The segment at 227-331 (EREASSSVVD…VQPPICSSNP (105 aa)) is disordered. Acidic residues predominate over residues 252–277 (NEEEEEDEEEEEEEEDEDEDEEEEGD).

In terms of tissue distribution, expressed in differentiating xylem cells.

The protein localises to the cell membrane. In terms of biological role, acts as a GTPase activator for the Rac-type GTPase by converting it to an inactive GDP-bound state. The sequence is that of Rho GTPase-activating protein 5 (ROPGAP5) from Arabidopsis thaliana (Mouse-ear cress).